A 331-amino-acid polypeptide reads, in one-letter code: Glycerophosphodiester phosphodiesterase 1 (331 aa).

Topologically, residues 1–3 are cytoplasmic; sequence MWL. Residues 4–24 form a helical membrane-spanning segment; it reads WEDQGGLLGPFSFVLVLLLVV. The Lumenal segment spans residues 25–248; sequence TRSPFNACVL…PRYSVFWKQS (224 aa). The 267-residue stretch at 65–331 folds into the GP-PDE domain; it reads VSAIAHRGGS…SMLEDCAPHF (267 aa). Residues Glu97 and Asp99 each contribute to the Mg(2+) site. Asn168 is a glycosylation site (N-linked (GlcNAc...) asparagine). Asp174 lines the Mg(2+) pocket. The chain crosses the membrane as a helical span at residues 249 to 269; that stretch reads VFVVLDILLDWSMHNVLWYLC. Residues 270 to 331 lie on the Cytoplasmic side of the membrane; that stretch reads GISAFLMQKD…SMLEDCAPHF (62 aa).

Belongs to the glycerophosphoryl diester phosphodiesterase family. Interacts with PRAF2. Interacts with RGS16. The cofactor is Mg(2+). In terms of processing, N-glycosylated. Widely expressed. Highly expressed in the brain and spinal cord, followed by kidney, liver, and testis. In contrast, little or no expression is detected in the heart or spleen.

Its subcellular location is the cell membrane. It localises to the cytoplasmic vesicle membrane. It catalyses the reaction sn-glycero-3-phospho-1D-myo-inositol + H2O = myo-inositol + sn-glycerol 3-phosphate + H(+). It carries out the reaction 1-O-(1Z-octadecenyl)-sn-glycero-3-phospho-(N-5Z,8Z,11Z,14Z-eicosatetraenoyl)-ethanolamine + H2O = 1-O-(1Z-octadecenyl)-sn-glycero-3-phosphate + N-(5Z,8Z,11Z,14Z-eicosatetraenoyl)-ethanolamine + H(+). The catalysed reaction is 1-O-(1Z-octadecenyl)-sn-glycero-3-phospho-(N-9Z-octadecenoyl)-ethanolamine + H2O = 1-O-(1Z-octadecenyl)-sn-glycero-3-phosphate + N-(9Z-octadecenoyl) ethanolamine + H(+). The enzyme catalyses 1-O-(1Z-octadecenyl)-sn-glycero-3-phospho-N-hexadecanoyl-ethanolamine + H2O = 1-O-(1Z-octadecenyl)-sn-glycero-3-phosphate + N-hexadecanoylethanolamine + H(+). It catalyses the reaction N-(4Z,7Z,10Z,13Z,16Z,19Z)-docosahexaenoyl-sn-glycero-3-phosphoethanolamine + H2O = N-(4Z,7Z,10Z,13Z,16Z,19Z)-docosahexaenoyl ethanolamine + sn-glycerol 3-phosphate + H(+). It carries out the reaction N-eicosanoyl-sn-glycero-3-phosphoethanolamine + H2O = N-eicosanoyl ethanolamine + sn-glycerol 3-phosphate + H(+). The catalysed reaction is N-hexadecanoyl-sn-glycero-3-phosphoethanolamine + H2O = N-hexadecanoylethanolamine + sn-glycerol 3-phosphate + H(+). The enzyme catalyses N-(9Z-octadecenoyl)-sn-glycero-3-phosphoethanolamine + H2O = N-(9Z-octadecenoyl) ethanolamine + sn-glycerol 3-phosphate + H(+). It catalyses the reaction N-(5Z,8Z,11Z,14Z-eicosatetraenoyl)-sn-glycero-3-phosphoethanolamine + H2O = N-(5Z,8Z,11Z,14Z-eicosatetraenoyl)-ethanolamine + sn-glycerol 3-phosphate + H(+). With respect to regulation, inhibited by EDTA, calcium chloride, and zinc chloride. Enhanced by magnesium chloride. Glycerophosphodiester phosphodiesterase activity can be modulated by G-protein signaling pathways. In terms of biological role, hydrolyzes the phosphodiester bond of glycerophosphodiesters such as glycerophosphoinositol (GroPIns) and glycerophosphoethanolamine (GroPEth), to yield a glycerol phosphate and an alcohol. Hydrolyzes glycerophospho-N-acylethanolamines to N-acylethanolamines in the brain and participates in bioactive N-acylethanolamine biosynthesis such as anandamide (an endocannabinoid), N-palmitoylethanolamine (an anti-inflammatory), and N-oleoylethanolamine (an anorexic). In addition, has a lysophospholipase D activity by hydrolyzing N-acyl-lysoplasmenylethanolamine (N-acyl-lysoPlsEt) to N-acylethanolamine. However lysophospholipase D activity is lower than glycerophosphodiester phosphodiesterase activity. Has little or no activity towards glycerophosphocholine. The sequence is that of Glycerophosphodiester phosphodiesterase 1 from Mus musculus (Mouse).